The chain runs to 161 residues: Phosphopantetheine adenylyltransferase (161 aa).

Ser-9 contacts substrate. Residues 9-10 (SF) and His-17 contribute to the ATP site. The substrate site is built by Lys-41, Val-73, and Lys-87. ATP is bound by residues 88-90 (GLR), Glu-98, and 122-128 (YSFVSSS).

This sequence belongs to the bacterial CoaD family. In terms of assembly, homohexamer. Requires Mg(2+) as cofactor.

The protein resides in the cytoplasm. It catalyses the reaction (R)-4'-phosphopantetheine + ATP + H(+) = 3'-dephospho-CoA + diphosphate. It functions in the pathway cofactor biosynthesis; coenzyme A biosynthesis; CoA from (R)-pantothenate: step 4/5. In terms of biological role, reversibly transfers an adenylyl group from ATP to 4'-phosphopantetheine, yielding dephospho-CoA (dPCoA) and pyrophosphate. The chain is Phosphopantetheine adenylyltransferase from Mycobacterium bovis (strain ATCC BAA-935 / AF2122/97).